The primary structure comprises 303 residues: Acetylglutamate kinase (303 aa).

Substrate-binding positions include 76–77, Arg-98, and Asn-192; that span reads GG.

This sequence belongs to the acetylglutamate kinase family. ArgB subfamily.

The protein resides in the cytoplasm. The catalysed reaction is N-acetyl-L-glutamate + ATP = N-acetyl-L-glutamyl 5-phosphate + ADP. The protein operates within amino-acid biosynthesis; L-arginine biosynthesis; N(2)-acetyl-L-ornithine from L-glutamate: step 2/4. In terms of biological role, catalyzes the ATP-dependent phosphorylation of N-acetyl-L-glutamate. This chain is Acetylglutamate kinase, found in Chlorobium phaeobacteroides (strain DSM 266 / SMG 266 / 2430).